The sequence spans 374 residues: UDP-N-acetylglucosamine--N-acetylmuramyl-(pentapeptide) pyrophosphoryl-undecaprenol N-acetylglucosamine transferase (374 aa).

Residues 13–15 (TGG), Asn124, Arg165, Ser193, and Gln294 contribute to the UDP-N-acetyl-alpha-D-glucosamine site.

This sequence belongs to the glycosyltransferase 28 family. MurG subfamily.

It localises to the cell inner membrane. It carries out the reaction di-trans,octa-cis-undecaprenyl diphospho-N-acetyl-alpha-D-muramoyl-L-alanyl-D-glutamyl-meso-2,6-diaminopimeloyl-D-alanyl-D-alanine + UDP-N-acetyl-alpha-D-glucosamine = di-trans,octa-cis-undecaprenyl diphospho-[N-acetyl-alpha-D-glucosaminyl-(1-&gt;4)]-N-acetyl-alpha-D-muramoyl-L-alanyl-D-glutamyl-meso-2,6-diaminopimeloyl-D-alanyl-D-alanine + UDP + H(+). Its pathway is cell wall biogenesis; peptidoglycan biosynthesis. In terms of biological role, cell wall formation. Catalyzes the transfer of a GlcNAc subunit on undecaprenyl-pyrophosphoryl-MurNAc-pentapeptide (lipid intermediate I) to form undecaprenyl-pyrophosphoryl-MurNAc-(pentapeptide)GlcNAc (lipid intermediate II). In Rhizobium leguminosarum bv. trifolii (strain WSM2304), this protein is UDP-N-acetylglucosamine--N-acetylmuramyl-(pentapeptide) pyrophosphoryl-undecaprenol N-acetylglucosamine transferase.